We begin with the raw amino-acid sequence, 524 residues long: Cytosolic Fe-S cluster assembly factor NAR1 (524 aa).

6 residues coordinate [4Fe-4S] cluster: cysteine 20, cysteine 52, cysteine 55, cysteine 58, cysteine 158, and cysteine 206. Residues isoleucine 362–asparagine 388 form a disordered region. Residues asparagine 369–asparagine 388 are compositionally biased toward low complexity. [4Fe-4S] cluster contacts are provided by cysteine 408 and cysteine 412. Residues serine 501–tryptophan 524 form a disordered region.

It belongs to the NARF family.

In terms of biological role, component of the cytosolic Fe/S protein assembly machinery. Required for maturation of extramitochondrial Fe/S proteins. May play a role in the transfer of pre-assembled Fe/S clusters to target apoproteins. The chain is Cytosolic Fe-S cluster assembly factor NAR1 (NAR1) from Vanderwaltozyma polyspora (strain ATCC 22028 / DSM 70294 / BCRC 21397 / CBS 2163 / NBRC 10782 / NRRL Y-8283 / UCD 57-17) (Kluyveromyces polysporus).